Here is a 529-residue protein sequence, read N- to C-terminus: MSPHFSLTTPLYYVNALPHIGSAYTTIAADVLARFYRLQGYQVRFITGTDEHGQKIERTAQQRGLSPQAHCDEIAAGFQALWQQLNIHYDRFSRTTSPRHHAIVNEFFQRVWDNGDIYLGQQQGWYCVECEEFKEERELLEGRRCPIHVNRTVEWRDERNYFFRLSKYQQALLDHYAEHPDFVQPPSRRNEVLSFIERGLQDFSISRVNLAWGFPVPTDPEQTLYVWFDALLGYVTALLEPEDEPTLANALKTWWPINLHIIGKDILRFHGISWPAMLMSAGLPLPEQIFVHGFLTKDGQKMGKSLGNTLDPFALVAQYGADAVRYYFMKEVEFGRDGDFSETRFVTILNADLANDLGNLLNRTLKMAWKYTDGKVPNVQGAAIPREHPLRQLAEHLSQTYGQGYRQLAFHEVCQQALTLARAGNKFLDEEAPWKRYRAGETAAVAEILYCVLESVRLVAYVLAPIIPQLSEAIYGQLGYSIRFNGSIAPDLLGDRQAQWGVLPASQPLANPEPIFQKLLLPATVADSP.

The 'HIGH' region signature appears at 12–22 (YYVNALPHIGS). Residues cysteine 127, cysteine 130, cysteine 145, and histidine 148 each contribute to the Zn(2+) site. The 'KMSKS' region signature appears at 301–305 (KMGKS). Lysine 304 contacts ATP.

This sequence belongs to the class-I aminoacyl-tRNA synthetase family. MetG type 2A subfamily. In terms of assembly, monomer. It depends on Zn(2+) as a cofactor.

It is found in the cytoplasm. The catalysed reaction is tRNA(Met) + L-methionine + ATP = L-methionyl-tRNA(Met) + AMP + diphosphate. In terms of biological role, is required not only for elongation of protein synthesis but also for the initiation of all mRNA translation through initiator tRNA(fMet) aminoacylation. The chain is Methionine--tRNA ligase from Thermosynechococcus vestitus (strain NIES-2133 / IAM M-273 / BP-1).